The sequence spans 434 residues: Sensor histidine kinase Hik2 (434 aa).

A GAF domain is found at 16–152 (ISLCQSQVRL…EAIAKSLAVA (137 aa)). Cys19 is a binding site for [3Fe-4S] cluster. One can recognise a Histidine kinase domain in the interval 182 to 432 (DLLHQLRNPL…TFTLWLRSGE (251 aa)). The residue at position 185 (His185) is a Phosphohistidine; by autocatalysis. Positions 357 to 361 (DTGYG) match the G1 box motif. The short motif at 386–390 (GTGLG) is the G2 box element.

Belongs to the chloroplast sensor kinase protein family. Exists as monomers, tetramers, hexamers and other higher-order oligomers; all are able to autophosphorylate. Upon treatment with 0.5 M NaCl only tetramers are seen, which are probably inactive. Interacts with both RppA and Rre1. Requires [3Fe-4S] cluster as cofactor. Autophosphorylates, probably on His-185.

The protein resides in the cytoplasm. The catalysed reaction is ATP + protein L-histidine = ADP + protein N-phospho-L-histidine.. Autophosphorylation is inhibited by Na(+) but not by Cl(-). Reducing agents dithionite, duroquinol and decyl-plastoquinone, but not NADPH or ferredoxin inhibit autophosphorylation. Oxidation of the Fe-S cluster (with potassium ferricyanide) induces a conformational change that is conducive to its autophosphorylation activity. Functionally, member of possibly 2 two-component regulatory system(s) Hik2/Rre1 and Hik2/RppA. Transduces PQ (plastoquinone) redox signals to photosystem gene expression machinery during the adjustment of photosystem stoichiometry. Reduced PQ suppresses its autophosphorylation activity (i.e. kinase activity is higher under oxidizing conditions). Member of two-component regulatory system Hik2/Rre1, controls expression of sigB (sll0306), sll0528, slr1119, slr0852 and ssr3188 in response to hyperosmotic stress. Activity responds to high salt (with a linear response as concentrations rise to 0.5 M NaCl); detects Cl(-) levels. Autophosphorylates and transfers phosphate to Rre1. May transfer phosphate to RppA in a possible Hik2/RppA two-component system. The protein is Sensor histidine kinase Hik2 of Synechocystis sp. (strain ATCC 27184 / PCC 6803 / Kazusa).